Reading from the N-terminus, the 321-residue chain is Probable protein phosphatase methylesterase 1 (321 aa).

Active-site residues include S170, D195, and H307.

It belongs to the AB hydrolase superfamily.

The catalysed reaction is [phosphatase 2A protein]-C-terminal L-leucine methyl ester + H2O = [phosphatase 2A protein]-C-terminal L-leucine + methanol + H(+). In terms of biological role, demethylates proteins that have been reversibly carboxymethylated. This chain is Probable protein phosphatase methylesterase 1 (ppme1), found in Dictyostelium discoideum (Social amoeba).